The following is a 310-amino-acid chain: MLKIVFMGTPEFSVPSLEKLIENYDVRAVLTQPDKPKGRGKKLAMSEVKEVAVKNNIPVFQPVKLKNDIEVINKLKEIAPDFIVVVAFGQILSKEVLDIPKYACINLHASLLPNYRGAAPINWAIINGETKTGNTTMIMAEGLDTGDMLLKDEVDIKRDMTAGELHDILMNRGADLLVKTIDEFSKGNIKPEKQGEPETDYAAMLSKDTGKINWNDKSERIYNLIRGLNPWPLAYSSYNDKVMKIHEAKILDAAPEGEPGLITNVDNNGIEVNSSDGKILITKIQFPGKKSMNVGEYIRGNNIDKGVILK.

110-113 is a binding site for (6S)-5,6,7,8-tetrahydrofolate; it reads SLLP.

Belongs to the Fmt family.

It catalyses the reaction L-methionyl-tRNA(fMet) + (6R)-10-formyltetrahydrofolate = N-formyl-L-methionyl-tRNA(fMet) + (6S)-5,6,7,8-tetrahydrofolate + H(+). Its function is as follows. Attaches a formyl group to the free amino group of methionyl-tRNA(fMet). The formyl group appears to play a dual role in the initiator identity of N-formylmethionyl-tRNA by promoting its recognition by IF2 and preventing the misappropriation of this tRNA by the elongation apparatus. The protein is Methionyl-tRNA formyltransferase of Clostridium acetobutylicum (strain ATCC 824 / DSM 792 / JCM 1419 / IAM 19013 / LMG 5710 / NBRC 13948 / NRRL B-527 / VKM B-1787 / 2291 / W).